A 1252-amino-acid polypeptide reads, in one-letter code: ATP-dependent helicase/nuclease subunit A (1252 aa).

The region spanning T6–R489 is the UvrD-like helicase ATP-binding domain. ATP is bound at residue A27–T34. A UvrD-like helicase C-terminal domain is found at A523 to G811.

Belongs to the helicase family. AddA subfamily. In terms of assembly, heterodimer of AddA and AddB/RexB. The cofactor is Mg(2+).

It catalyses the reaction Couples ATP hydrolysis with the unwinding of duplex DNA by translocating in the 3'-5' direction.. It carries out the reaction ATP + H2O = ADP + phosphate + H(+). The heterodimer acts as both an ATP-dependent DNA helicase and an ATP-dependent, dual-direction single-stranded exonuclease. Recognizes the chi site generating a DNA molecule suitable for the initiation of homologous recombination. The AddA nuclease domain is required for chi fragment generation; this subunit has the helicase and 3' -&gt; 5' nuclease activities. This is ATP-dependent helicase/nuclease subunit A from Clostridium acetobutylicum (strain ATCC 824 / DSM 792 / JCM 1419 / IAM 19013 / LMG 5710 / NBRC 13948 / NRRL B-527 / VKM B-1787 / 2291 / W).